Consider the following 65-residue polypeptide: Large ribosomal subunit protein bL31 (65 aa).

Zn(2+) is bound by residues Cys16, Cys18, Cys36, and Cys39.

It belongs to the bacterial ribosomal protein bL31 family. Type A subfamily. Part of the 50S ribosomal subunit. The cofactor is Zn(2+).

In terms of biological role, binds the 23S rRNA. This Desulfitobacterium hafniense (strain DSM 10664 / DCB-2) protein is Large ribosomal subunit protein bL31.